Here is a 209-residue protein sequence, read N- to C-terminus: MSNPRVEELPDEEPKKTTVQEHEDDSSDDSEVEEVGEGQLPAGSTVIHNRNEKKARKALEKLHLTRIPGITRVTLRRPKNILFVINTPEVYKSPNSNTYIVFGEAKIEDVNAAAQQAAAAQLASQNAEDHSGHNHGEPSKAVEADEKKEDKEDDEDEEEEEEEEVDASGLEDKDIELVMTQANVSRNKAVKALKENDNDIVNSIMALSI.

The segment covering 1–21 (MSNPRVEELPDEEPKKTTVQE) has biased composition (basic and acidic residues). 2 disordered regions span residues 1–51 (MSNP…HNRN) and 121–175 (QLAS…DKDI). Residues 22–36 (HEDDSSDDSEVEEVG) are compositionally biased toward acidic residues. The region spanning 49-114 (NRNEKKARKA…AKIEDVNAAA (66 aa)) is the NAC-A/B domain. Over residues 127 to 150 (AEDHSGHNHGEPSKAVEADEKKED) the composition is skewed to basic and acidic residues. Positions 151 to 166 (KEDDEDEEEEEEEEVD) are enriched in acidic residues. Positions 170–209 (LEDKDIELVMTQANVSRNKAVKALKENDNDIVNSIMALSI) constitute a UBA domain.

It belongs to the NAC-alpha family. Part of the nascent polypeptide-associated complex (NAC), consisting of EGD2 and EGD1. NAC associates with ribosomes via EGD1.

The protein localises to the cytoplasm. Its subcellular location is the nucleus. Component of the nascent polypeptide-associated complex (NAC), a dynamic component of the ribosomal exit tunnel, protecting the emerging polypeptides from interaction with other cytoplasmic proteins to ensure appropriate nascent protein targeting. The NAC complex also promotes mitochondrial protein import by enhancing productive ribosome interactions with the outer mitochondrial membrane and blocks the inappropriate interaction of ribosomes translating non-secretory nascent polypeptides with translocation sites in the membrane of the endoplasmic reticulum. EGD2 may also be involved in transcription regulation. The chain is Nascent polypeptide-associated complex subunit alpha (EGD2) from Gibberella zeae (strain ATCC MYA-4620 / CBS 123657 / FGSC 9075 / NRRL 31084 / PH-1) (Wheat head blight fungus).